The sequence spans 1028 residues: Carbamoyl phosphate synthase large chain (1028 aa).

Residues Met1–Glu409 form a carboxyphosphate synthetic domain region. Residues Arg129, Arg169, Gly175, Gly176, Glu208, Val210, Glu215, Gly241, Val242, His243, Gln285, and Glu299 each contribute to the ATP site. Positions Gln133–Val328 constitute an ATP-grasp 1 domain. Mg(2+) contacts are provided by Gln285, Glu299, and Asn301. The Mn(2+) site is built by Gln285, Glu299, and Asn301. Positions Arg410–Val549 are oligomerization domain. Positions Trp550–Gly933 are carbamoyl phosphate synthetic domain. The ATP-grasp 2 domain occupies His674–Val866. Arg710, Arg750, Leu752, Glu757, Gly782, Val783, His784, Ser785, Gln825, and Glu837 together coordinate ATP. Residues Gln825, Glu837, and Asn839 each contribute to the Mg(2+) site. Positions 825, 837, and 839 each coordinate Mn(2+). Residues Gln934 to Gly1028 enclose the MGS-like domain. Residues Gln934 to Gly1028 are allosteric domain.

Belongs to the CarB family. As to quaternary structure, composed of two chains; the small (or glutamine) chain promotes the hydrolysis of glutamine to ammonia, which is used by the large (or ammonia) chain to synthesize carbamoyl phosphate. Tetramer of heterodimers (alpha,beta)4. It depends on Mg(2+) as a cofactor. Mn(2+) is required as a cofactor.

The enzyme catalyses hydrogencarbonate + L-glutamine + 2 ATP + H2O = carbamoyl phosphate + L-glutamate + 2 ADP + phosphate + 2 H(+). It catalyses the reaction hydrogencarbonate + NH4(+) + 2 ATP = carbamoyl phosphate + 2 ADP + phosphate + 2 H(+). It participates in amino-acid biosynthesis; L-arginine biosynthesis; carbamoyl phosphate from bicarbonate: step 1/1. Its pathway is pyrimidine metabolism; UMP biosynthesis via de novo pathway; (S)-dihydroorotate from bicarbonate: step 1/3. In terms of biological role, large subunit of the glutamine-dependent carbamoyl phosphate synthetase (CPSase). CPSase catalyzes the formation of carbamoyl phosphate from the ammonia moiety of glutamine, carbonate, and phosphate donated by ATP, constituting the first step of 2 biosynthetic pathways, one leading to arginine and/or urea and the other to pyrimidine nucleotides. The large subunit (synthetase) binds the substrates ammonia (free or transferred from glutamine from the small subunit), hydrogencarbonate and ATP and carries out an ATP-coupled ligase reaction, activating hydrogencarbonate by forming carboxy phosphate which reacts with ammonia to form carbamoyl phosphate. In Thermus thermophilus (strain ATCC BAA-163 / DSM 7039 / HB27), this protein is Carbamoyl phosphate synthase large chain.